The primary structure comprises 115 residues: Hydrogenase maturation factor HypA (115 aa).

Histidine 2 provides a ligand contact to Ni(2+). Positions 73, 76, 89, and 92 each coordinate Zn(2+).

Belongs to the HypA/HybF family.

Functionally, involved in the maturation of [NiFe] hydrogenases. Required for nickel insertion into the metal center of the hydrogenase. This is Hydrogenase maturation factor HypA from Aquifex aeolicus (strain VF5).